We begin with the raw amino-acid sequence, 102 residues long: Iron-sulfur cluster assembly protein CyaY (102 aa).

It belongs to the frataxin family.

Involved in iron-sulfur (Fe-S) cluster assembly. May act as a regulator of Fe-S biogenesis. This Histophilus somni (strain 2336) (Haemophilus somnus) protein is Iron-sulfur cluster assembly protein CyaY.